A 160-amino-acid polypeptide reads, in one-letter code: Transcription elongation factor GreA (160 aa).

Residues 49–75 (SEYDEAKNDQAFTEGKILQLENKLKNA) are a coiled coil.

This sequence belongs to the GreA/GreB family.

In terms of biological role, necessary for efficient RNA polymerase transcription elongation past template-encoded arresting sites. The arresting sites in DNA have the property of trapping a certain fraction of elongating RNA polymerases that pass through, resulting in locked ternary complexes. Cleavage of the nascent transcript by cleavage factors such as GreA or GreB allows the resumption of elongation from the new 3'terminus. GreA releases sequences of 2 to 3 nucleotides. This chain is Transcription elongation factor GreA, found in Clostridium botulinum (strain Eklund 17B / Type B).